We begin with the raw amino-acid sequence, 193 residues long: Corrinoid adenosyltransferase (193 aa).

ATP-binding positions include 5 to 13, lysine 22, 130 to 135, and asparagine 154; these read TKTGDKGQT and RRAERR.

Belongs to the Cob(I)alamin adenosyltransferase family. In terms of assembly, homotrimer.

It is found in the cytoplasm. The enzyme catalyses 2 cob(II)yrinate a,c diamide + reduced [electron-transfer flavoprotein] + 2 ATP = 2 adenosylcob(III)yrinate a,c-diamide + 2 triphosphate + oxidized [electron-transfer flavoprotein] + 3 H(+). It catalyses the reaction 2 cob(II)alamin + reduced [electron-transfer flavoprotein] + 2 ATP = 2 adenosylcob(III)alamin + 2 triphosphate + oxidized [electron-transfer flavoprotein] + 3 H(+). It participates in cofactor biosynthesis; adenosylcobalamin biosynthesis; adenosylcobalamin from cob(II)yrinate a,c-diamide: step 2/7. This chain is Corrinoid adenosyltransferase (yvqK), found in Bacillus subtilis (strain 168).